Consider the following 67-residue polypeptide: Large ribosomal subunit protein uL29 (67 aa).

This sequence belongs to the universal ribosomal protein uL29 family.

The chain is Large ribosomal subunit protein uL29 (rpmC) from Halalkalibacterium halodurans (strain ATCC BAA-125 / DSM 18197 / FERM 7344 / JCM 9153 / C-125) (Bacillus halodurans).